A 270-amino-acid chain; its full sequence is Protein tonB2 (270 aa).

Topologically, residues 1-51 (MATPQPVDARTQPWRETPGGDLVALGRPVRQALHLVRHNPAQGRVLSRRET) are cytoplasmic. The chain crosses the membrane as a helical span at residues 52–69 (ILLVLFALTLHGAVIHWL). Over 70–270 (SQQRTPALPE…VSVPIDFKLN (201 aa)) the chain is Periplasmic. The segment at 80-187 (VPPQVPPMTI…LTPPSANAGY (108 aa)) is disordered. Residues 94–118 (PAPPVVEPPPPEPLPPVVEEPPPPV) show a composition bias toward pro residues. Over residues 133 to 143 (PKPKPKPKPQP) the composition is skewed to basic residues. A compositionally biased stretch (pro residues) spans 144–180 (RPKPAPKAVEPAPPAPPQPAAPPAPPAPAAAPAPLTP). A TonB C-terminal domain is found at 180–270 (PPSANAGYLH…VSVPIDFKLN (91 aa)).

This sequence belongs to the TonB family. Homodimer. Forms a complex with the accessory proteins ExbB and ExbD.

It is found in the cell inner membrane. Interacts with outer membrane receptor proteins that carry out high-affinity binding and energy dependent uptake into the periplasmic space of specific substrates. It could act to transduce energy from the cytoplasmic membrane to specific energy-requiring processes in the outer membrane, resulting in the release into the periplasm of ligands bound by these outer membrane proteins. The sequence is that of Protein tonB2 (tonB2) from Pseudomonas aeruginosa (strain ATCC 15692 / DSM 22644 / CIP 104116 / JCM 14847 / LMG 12228 / 1C / PRS 101 / PAO1).